The sequence spans 178 residues: CDP-diacylglycerol--glycerol-3-phosphate 3-phosphatidyltransferase (178 aa).

4 consecutive transmembrane segments (helical) span residues leucine 28–alanine 48, leucine 88–isoleucine 108, leucine 125–leucine 145, and isoleucine 147–tyrosine 167.

This sequence belongs to the CDP-alcohol phosphatidyltransferase class-I family.

It is found in the cell membrane. It catalyses the reaction a CDP-1,2-diacyl-sn-glycerol + sn-glycerol 3-phosphate = a 1,2-diacyl-sn-glycero-3-phospho-(1'-sn-glycero-3'-phosphate) + CMP + H(+). Its pathway is phospholipid metabolism; phosphatidylglycerol biosynthesis; phosphatidylglycerol from CDP-diacylglycerol: step 1/2. In terms of biological role, this protein catalyzes the committed step to the synthesis of the acidic phospholipids. The polypeptide is CDP-diacylglycerol--glycerol-3-phosphate 3-phosphatidyltransferase (pgsA) (Aquifex aeolicus (strain VF5)).